We begin with the raw amino-acid sequence, 622 residues long: Low affinity potassium transport system protein Kup (622 aa).

12 consecutive transmembrane segments (helical) span residues 9–29, 49–69, 101–121, 137–157, 165–185, 212–232, 247–267, 279–299, 337–357, 363–383, 397–417, and 419–439; these read LPAV…TSPL, VFGF…LKYL, VLVI…VITP, PSMD…LFII, VGKL…VLGA, AVSF…EALY, WFTV…ALLL, LLAP…ATII, IYIP…IVSF, LAAA…ILFC, AWVL…ANVV, and ILSG…IMTT.

This sequence belongs to the HAK/KUP transporter (TC 2.A.72) family.

The protein resides in the cell inner membrane. It catalyses the reaction K(+)(in) + H(+)(in) = K(+)(out) + H(+)(out). In terms of biological role, responsible for the low-affinity transport of potassium into the cell. Likely operates as a K(+):H(+) symporter. The chain is Low affinity potassium transport system protein Kup from Pectobacterium carotovorum subsp. carotovorum (strain PC1).